The following is a 715-amino-acid chain: Polyribonucleotide nucleotidyltransferase (715 aa).

Mg(2+)-binding residues include aspartate 493 and aspartate 499. In terms of domain architecture, KH spans 560–619 (PRMITIKINPEKIRDVIGKGGSVIRALTEETGTTIDISDDGVVTIASTSSEGMAEAKKRI). Residues 629-697 (GQVYEGTVLK…EKGRVRLSAK (69 aa)) form the S1 motif domain.

The protein belongs to the polyribonucleotide nucleotidyltransferase family. Requires Mg(2+) as cofactor.

It is found in the cytoplasm. The enzyme catalyses RNA(n+1) + phosphate = RNA(n) + a ribonucleoside 5'-diphosphate. Functionally, involved in mRNA degradation. Catalyzes the phosphorolysis of single-stranded polyribonucleotides processively in the 3'- to 5'-direction. The protein is Polyribonucleotide nucleotidyltransferase of Burkholderia multivorans (strain ATCC 17616 / 249).